Here is a 269-residue protein sequence, read N- to C-terminus: MFDFMTLEKVWEKGPLVHNITNIVVANDSANGLLAIGASPIMGSAKEEMDELAKMADVLVINIGTLDGELVTAMKIAGRAANVAGTPVVLDPVGVGATSYRRKVVQELLAEIQFTAIRGNAGELAAIAGEAWEAKGVDAGVGSADVLSIAEKVANEWSTVVIISGEVDVISDGTRFAKVANGSALLPRITGSGCLLSAVCGSFMAVQDDAFRASVEACASYAVASEYAEIELERKLPGSFRPQFLDALASWSVEKTRAKAKIQESGEHK.

Methionine 42 provides a ligand contact to substrate. ATP is bound by residues arginine 118 and serine 164. Glycine 191 lines the substrate pocket.

This sequence belongs to the Thz kinase family. Mg(2+) is required as a cofactor.

It catalyses the reaction 5-(2-hydroxyethyl)-4-methylthiazole + ATP = 4-methyl-5-(2-phosphooxyethyl)-thiazole + ADP + H(+). It participates in cofactor biosynthesis; thiamine diphosphate biosynthesis; 4-methyl-5-(2-phosphoethyl)-thiazole from 5-(2-hydroxyethyl)-4-methylthiazole: step 1/1. In terms of biological role, catalyzes the phosphorylation of the hydroxyl group of 4-methyl-5-beta-hydroxyethylthiazole (THZ). This chain is Hydroxyethylthiazole kinase, found in Listeria monocytogenes serotype 4b (strain F2365).